The following is a 273-amino-acid chain: Phycobilisome 32.1 kDa linker polypeptide, phycocyanin-associated, rod 2 (273 aa).

In terms of domain architecture, PBS-linker spans 1-180; sequence MTSLVSAQRL…VYRGYATSDR (180 aa). Positions 220–273 constitute a CpcD-like domain; that stretch reads NQMYRLQVIQGAAPGRGTRVRRGKAEYLVSYDNLSAKLQQINRQGDTVTMISLA.

Belongs to the phycobilisome linker protein family. Part of 2 PBS rod complexes, the conventional CpcG-PBS rod and a photosystem I-specific CpcL-PBS rod, both of which include ferredoxin--NADP reductase (petH). CpcG-PBS has on average 3 stacked phycocyanin hexamers (PC, CpcA and CpcB). Linker CpcG connects the PC stack to the thylakoid, the hexamers are linked by 1 copy of CpcC1, 1 copy of CpcC2 and the stack is terminated by a single copy of CpcD. The CpcL-PBS has on average 5 stacked phycocyanin hexamers (PC, CpcA and CpcB). Linker CpcL connects the PC stack to the thylakoid, the hexamers are linked by 1 copy of CpcC1, 3 copies of CpcC2 and the stack is terminated by a single copy of CpcD. Interacts with the C-phycocyanin (PC) beta subunit (cpcB), it may fit into the center of the PC hexamer.

It is found in the cellular thylakoid membrane. Functionally, rod linker protein, associated with phycocyanin. Linker polypeptides determine the state of aggregation and the location of the disk-shaped phycobiliprotein units within the phycobilisome and modulate their spectroscopic properties in order to mediate a directed and optimal energy transfer. The protein is Phycobilisome 32.1 kDa linker polypeptide, phycocyanin-associated, rod 2 (cpcC2) of Synechocystis sp. (strain ATCC 27184 / PCC 6803 / Kazusa).